The following is a 481-amino-acid chain: Probable glycine dehydrogenase (decarboxylating) subunit 2 (481 aa).

The interval 1–23 (MVIFEKTRGKNSPSVMPSKKGDV) is disordered. The residue at position 263 (K263) is an N6-(pyridoxal phosphate)lysine.

It belongs to the GcvP family. C-terminal subunit subfamily. The glycine cleavage system is composed of four proteins: P, T, L and H. In this organism, the P 'protein' is a heterodimer of two subunits. It depends on pyridoxal 5'-phosphate as a cofactor.

It carries out the reaction N(6)-[(R)-lipoyl]-L-lysyl-[glycine-cleavage complex H protein] + glycine + H(+) = N(6)-[(R)-S(8)-aminomethyldihydrolipoyl]-L-lysyl-[glycine-cleavage complex H protein] + CO2. In terms of biological role, the glycine cleavage system catalyzes the degradation of glycine. The P protein binds the alpha-amino group of glycine through its pyridoxal phosphate cofactor; CO(2) is released and the remaining methylamine moiety is then transferred to the lipoamide cofactor of the H protein. This is Probable glycine dehydrogenase (decarboxylating) subunit 2 from Francisella philomiragia subsp. philomiragia (strain ATCC 25017 / CCUG 19701 / FSC 153 / O#319-036).